A 181-amino-acid polypeptide reads, in one-letter code: Mannose-specific lectin (181 aa).

The N-terminal stretch at 1–30 (MGRTTSSPKAMMRIATVAAILTILASTCMA) is a signal peptide. The Bulb-type lectin domain occupies 31–140 (RNVLTNGEGL…DIWSTGTYRR (110 aa)). Residues glutamine 56, aspartate 58, asparagine 60, tyrosine 64, tryptophan 71, alanine 72, asparagine 74, glutamine 88, aspartate 90, asparagine 92, tyrosine 96, valine 103, tryptophan 104, asparagine 107, asparagine 114, glutamine 120, aspartate 122, asparagine 124, tyrosine 128, and tryptophan 133 each coordinate alpha-D-mannopyranose. A disulfide bond links cysteine 59 and cysteine 83.

Homodimer.

Its subcellular location is the secreted. Functionally, mannose-specific lectin. Shows agglutinating activity towards rabbit erythrocytes. However, it does not show agglutinating activity towards human erythrocytes. Has insecticidal activity against the cotton leafworm S.littoralis and the peach potato aphid M.persicae. Also displays antiviral activity and therefore may contribute to defense against infections. In Allium sativum (Garlic), this protein is Mannose-specific lectin.